A 341-amino-acid chain; its full sequence is Glycerol-3-phosphate dehydrogenase [NAD(P)+] (341 aa).

Residues serine 14, phenylalanine 15, arginine 35, and lysine 108 each contribute to the NADPH site. Positions 108 and 136 each coordinate sn-glycerol 3-phosphate. Alanine 140 is a binding site for NADPH. Sn-glycerol 3-phosphate-binding residues include lysine 191, aspartate 244, serine 254, arginine 255, and asparagine 256. The active-site Proton acceptor is lysine 191. Arginine 255 lines the NADPH pocket. NADPH-binding residues include valine 279 and glutamate 281.

Belongs to the NAD-dependent glycerol-3-phosphate dehydrogenase family.

It localises to the cytoplasm. It carries out the reaction sn-glycerol 3-phosphate + NAD(+) = dihydroxyacetone phosphate + NADH + H(+). The enzyme catalyses sn-glycerol 3-phosphate + NADP(+) = dihydroxyacetone phosphate + NADPH + H(+). The protein operates within membrane lipid metabolism; glycerophospholipid metabolism. Its function is as follows. Catalyzes the reduction of the glycolytic intermediate dihydroxyacetone phosphate (DHAP) to sn-glycerol 3-phosphate (G3P), the key precursor for phospholipid synthesis. In Pseudomonas savastanoi pv. phaseolicola (strain 1448A / Race 6) (Pseudomonas syringae pv. phaseolicola (strain 1448A / Race 6)), this protein is Glycerol-3-phosphate dehydrogenase [NAD(P)+].